The chain runs to 155 residues: Protein-export protein SecB (155 aa).

This sequence belongs to the SecB family. Homotetramer, a dimer of dimers. One homotetramer interacts with 1 SecA dimer.

It is found in the cytoplasm. One of the proteins required for the normal export of preproteins out of the cell cytoplasm. It is a molecular chaperone that binds to a subset of precursor proteins, maintaining them in a translocation-competent state. It also specifically binds to its receptor SecA. This chain is Protein-export protein SecB, found in Klebsiella pneumoniae subsp. pneumoniae (strain ATCC 700721 / MGH 78578).